Reading from the N-terminus, the 400-residue chain is Chaperone protein DnaJ (400 aa).

A J domain is found at 4–69 (DYYETLGVTR…DKRRRYDQFG (66 aa)). The segment at 156-237 (GVEKTLKVKR…CYGEGIKLGE (82 aa)) adopts a CR-type zinc-finger fold. Zn(2+)-binding residues include cysteine 169, cysteine 172, cysteine 185, cysteine 188, cysteine 211, cysteine 214, cysteine 225, and cysteine 228. CXXCXGXG motif repeat units follow at residues 169–176 (CEVCNGTG), 185–192 (CQTCHGSG), 211–218 (CPTCGGEG), and 225–232 (CTACYGEG).

Belongs to the DnaJ family. As to quaternary structure, homodimer. Requires Zn(2+) as cofactor.

The protein localises to the cytoplasm. In terms of biological role, participates actively in the response to hyperosmotic and heat shock by preventing the aggregation of stress-denatured proteins and by disaggregating proteins, also in an autonomous, DnaK-independent fashion. Unfolded proteins bind initially to DnaJ; upon interaction with the DnaJ-bound protein, DnaK hydrolyzes its bound ATP, resulting in the formation of a stable complex. GrpE releases ADP from DnaK; ATP binding to DnaK triggers the release of the substrate protein, thus completing the reaction cycle. Several rounds of ATP-dependent interactions between DnaJ, DnaK and GrpE are required for fully efficient folding. Also involved, together with DnaK and GrpE, in the DNA replication of plasmids through activation of initiation proteins. In Chlorobium chlorochromatii (strain CaD3), this protein is Chaperone protein DnaJ.